A 165-amino-acid chain; its full sequence is Myosin regulatory light chain 2, ventricular/cardiac muscle isoform (165 aa).

Ser-2 carries the post-translational modification N,N,N-trimethylserine. Asn-14 is subject to Deamidated asparagine. Residues Ser-15 and Ser-19 each carry the phosphoserine modification. 3 EF-hand domains span residues 24-59, 94-129, and 130-165; these read TQIQ…LGRV, DPEE…QAER, and FSKD…GEEK. Asp-37, Asn-39, Asp-41, and Asp-48 together coordinate Ca(2+). The residue at position 52 (Thr-52) is a Phosphothreonine.

In terms of assembly, myosin is a hexamer of 2 heavy chains and 4 light chains. Interacts with MYOC. Post-translationally, N-terminus is methylated by METTL11A/NTM1. Phosphorylated by MYLK3 and MYLK2; promotes cardiac muscle contraction and function. Dephosphorylated by PPP1CB complexed to PPP1R12B. The phosphorylated form in adult is expressed as gradients across the heart from endocardium (low phosphorylation) to epicardium (high phosphorylation); regulates cardiac torsion and workload distribution.

It localises to the cytoplasm. Its subcellular location is the myofibril. It is found in the sarcomere. The protein localises to the a band. Its function is as follows. Contractile protein that plays a role in heart development and function. Following phosphorylation, plays a role in cross-bridge cycling kinetics and cardiac muscle contraction by increasing myosin lever arm stiffness and promoting myosin head diffusion; as a consequence of the increase in maximum contraction force and calcium sensitivity of contraction force. These events altogether slow down myosin kinetics and prolong duty cycle resulting in accumulated myosins being cooperatively recruited to actin binding sites to sustain thin filament activation as a means to fine-tune myofilament calcium sensitivity to force. During cardiogenesis plays an early role in cardiac contractility by promoting cardiac myofibril assembly. In Oryctolagus cuniculus (Rabbit), this protein is Myosin regulatory light chain 2, ventricular/cardiac muscle isoform.